A 262-amino-acid chain; its full sequence is Snake venom serine protease catroxase-1 (262 aa).

An N-terminal signal peptide occupies residues 1–18 (MVLIRVLANLLILQLSYA). Positions 19–24 (QKSSEP) are excised as a propeptide. Residues 25-250 (IIGGDECNRN…HLDWIQSIIA (226 aa)) form the Peptidase S1 domain. 6 disulfides stabilise this stretch: Cys31-Cys162, Cys49-Cys65, Cys97-Cys257, Cys141-Cys211, Cys173-Cys190, and Cys201-Cys226. His64 acts as the Charge relay system in catalysis. A glycan (N-linked (GlcNAc...) asparagine) is linked at Asn102. The Charge relay system role is filled by Asp109. Asn169 carries an N-linked (GlcNAc...) asparagine glycan. Ser205 serves as the catalytic Charge relay system.

It belongs to the peptidase S1 family. Snake venom subfamily. As to quaternary structure, monomer. Expressed by the venom gland.

It localises to the secreted. In terms of biological role, snake venom serine protease that may act in the hemostasis system of the prey. This Crotalus atrox (Western diamondback rattlesnake) protein is Snake venom serine protease catroxase-1.